The chain runs to 274 residues: MRKVAIYGKGGIGKSTTTQNTVAGLAEMGKKVMVIGCDPKADSTRLLLGGLQQKTVLDTLREEGEEVELEDIIKEGYRNTRCTESGGPEPGVGCAGRGIITSVNLLEQLGAFDDEWNLDYVFYDVLGDVVCGGFAMPIRDGKAEEIYIVCSGEMMAMYAANNICKGILKYADAGGVRLGGLICNSRKVDNEREMIEELARRIGTQMIHFVPRDNFVQRAEINRKTVIDYDPTHGQADEYRALAQKINDNKMFVIPKPLEIEELESLLIEFGIAN.

8–15 is a binding site for ATP; it reads GKGGIGKS. Cys94 contributes to the [4Fe-4S] cluster binding site. Residue Arg97 is modified to ADP-ribosylarginine; by dinitrogenase reductase ADP-ribosyltransferase. Cys131 lines the [4Fe-4S] cluster pocket.

It belongs to the NifH/BchL/ChlL family. Homodimer. [4Fe-4S] cluster serves as cofactor. Post-translationally, the reversible ADP-ribosylation of Arg-97 inactivates the nitrogenase reductase and regulates nitrogenase activity.

The catalysed reaction is N2 + 8 reduced [2Fe-2S]-[ferredoxin] + 16 ATP + 16 H2O = H2 + 8 oxidized [2Fe-2S]-[ferredoxin] + 2 NH4(+) + 16 ADP + 16 phosphate + 6 H(+). The key enzymatic reactions in nitrogen fixation are catalyzed by the nitrogenase complex, which has 2 components: the iron protein and the molybdenum-iron protein. This chain is Nitrogenase iron protein, found in Chlorobium chlorochromatii (strain CaD3).